The following is a 348-amino-acid chain: S-adenosylmethionine:tRNA ribosyltransferase-isomerase (348 aa).

Belongs to the QueA family. Monomer.

It is found in the cytoplasm. The enzyme catalyses 7-aminomethyl-7-carbaguanosine(34) in tRNA + S-adenosyl-L-methionine = epoxyqueuosine(34) in tRNA + adenine + L-methionine + 2 H(+). It participates in tRNA modification; tRNA-queuosine biosynthesis. Functionally, transfers and isomerizes the ribose moiety from AdoMet to the 7-aminomethyl group of 7-deazaguanine (preQ1-tRNA) to give epoxyqueuosine (oQ-tRNA). The sequence is that of S-adenosylmethionine:tRNA ribosyltransferase-isomerase from Amoebophilus asiaticus (strain 5a2).